A 559-amino-acid polypeptide reads, in one-letter code: Probable D-2-hydroxyglutarate dehydrogenase, mitochondrial (559 aa).

Residues 1-80 (MARRAAAGLL…MNFEVQKRSF (80 aa)) constitute a mitochondrion transit peptide. In terms of domain architecture, FAD-binding PCMH-type spans 131 to 310 (YKGSSQLLLL…TKIAILTPAK (180 aa)).

The protein belongs to the FAD-binding oxidoreductase/transferase type 4 family. As to quaternary structure, homodimer. Requires FAD as cofactor.

The protein resides in the mitochondrion. The enzyme catalyses (R)-2-hydroxyglutarate + A = 2-oxoglutarate + AH2. Catalyzes the oxidation of D-2-hydroxyglutarate to alpha-ketoglutarate. The sequence is that of Probable D-2-hydroxyglutarate dehydrogenase, mitochondrial (D2HGDH) from Oryza sativa subsp. japonica (Rice).